The following is a 27-amino-acid chain: Urumin (27 aa).

In terms of tissue distribution, expressed by the skin glands.

It is found in the secreted. In terms of biological role, amphibian peptide that shows viricidal activity against human H1N1 influenza A virus. It specifically targets the conserved stalk region of H1 hemagglutinin, and acts by actively destroying influenza virions. It shows a reduced activity on human H3N2 influenza A virus and no activity against other viruses (HIV, SIV, HSV-II, hepatitis C, Ebola, Zika, and Dengue viruses). In vivo, the peptide also protects mice infected with mouse-adapted influenza virus from lethal influenza infection. The peptide synthesized in D-amino acids is inactive. The sequence is that of Urumin from Hydrophylax bahuvistara (Wide-spread fungoid frog).